A 99-amino-acid chain; its full sequence is Large ribosomal subunit protein eL36A (99 aa).

It belongs to the eukaryotic ribosomal protein eL36 family. As to quaternary structure, component of the large ribosomal subunit (LSU). Mature yeast ribosomes consist of a small (40S) and a large (60S) subunit. The 40S small subunit contains 1 molecule of ribosomal RNA (18S rRNA) and at least 33 different proteins. The large 60S subunit contains 3 rRNA molecules (25S, 5.8S and 5S rRNA) and at least 46 different proteins.

The protein localises to the cytoplasm. In terms of biological role, component of the ribosome, a large ribonucleoprotein complex responsible for the synthesis of proteins in the cell. The small ribosomal subunit (SSU) binds messenger RNAs (mRNAs) and translates the encoded message by selecting cognate aminoacyl-transfer RNA (tRNA) molecules. The large subunit (LSU) contains the ribosomal catalytic site termed the peptidyl transferase center (PTC), which catalyzes the formation of peptide bonds, thereby polymerizing the amino acids delivered by tRNAs into a polypeptide chain. The nascent polypeptides leave the ribosome through a tunnel in the LSU and interact with protein factors that function in enzymatic processing, targeting, and the membrane insertion of nascent chains at the exit of the ribosomal tunnel. This Schizosaccharomyces pombe (strain 972 / ATCC 24843) (Fission yeast) protein is Large ribosomal subunit protein eL36A (rpl3601).